The sequence spans 284 residues: Heat stress transcription factor B-1 (284 aa).

The DNA-binding element occupies 12–106; that stretch reads PAPFLSKTYQ…LLTDIRRRKS (95 aa). A disordered region spans residues 118–151; it reads VGSPSESNSGGGDDHGSSSTSSPGSSKNPGSVEN. Residues 134-148 show a composition bias toward low complexity; sequence SSSTSSPGSSKNPGS. The tract at residues 147–192 is hydrophobic repeat HR-A/B; that stretch reads GSVENMVADLSGENEKLKRENNNLSSELAAAKKQRDELVTFLTGHL. Residues 247–252 carry the Nuclear localization signal motif; the sequence is RKKRDR.

This sequence belongs to the HSF family. Class B subfamily. As to quaternary structure, homotrimer. In terms of processing, exhibits temperature-dependent phosphorylation.

Its subcellular location is the nucleus. Its function is as follows. Transcriptional regulator that specifically binds DNA sequence 5'-AGAAnnTTCT-3' known as heat shock promoter elements (HSE). In Arabidopsis thaliana (Mouse-ear cress), this protein is Heat stress transcription factor B-1 (HSFB1).